A 393-amino-acid chain; its full sequence is Probable acetyl-CoA acyltransferase (393 aa).

The Acyl-thioester intermediate role is filled by C88. Catalysis depends on proton acceptor residues H349 and C378.

It belongs to the thiolase-like superfamily. Thiolase family.

It is found in the cytoplasm. The enzyme catalyses 2 acetyl-CoA = acetoacetyl-CoA + CoA. The chain is Probable acetyl-CoA acyltransferase from Staphylococcus aureus (strain COL).